Reading from the N-terminus, the 509-residue chain is Cytochrome P450 6A1 (509 aa).

Residue Cys-449 participates in heme binding.

Belongs to the cytochrome P450 family. It depends on heme as a cofactor.

The protein resides in the endoplasmic reticulum membrane. It is found in the microsome membrane. It carries out the reaction an organic molecule + reduced [NADPH--hemoprotein reductase] + O2 = an alcohol + oxidized [NADPH--hemoprotein reductase] + H2O + H(+). Functionally, involved in the metabolism of insect hormones and in the breakdown of synthetic insecticides. In Musca domestica (House fly), this protein is Cytochrome P450 6A1 (CYP6A1).